Reading from the N-terminus, the 313-residue chain is Ribosomal RNA small subunit methyltransferase H (313 aa).

Residues 33 to 35, aspartate 53, phenylalanine 82, aspartate 103, and glutamine 110 each bind S-adenosyl-L-methionine; that span reads AGH.

Belongs to the methyltransferase superfamily. RsmH family.

Its subcellular location is the cytoplasm. It carries out the reaction cytidine(1402) in 16S rRNA + S-adenosyl-L-methionine = N(4)-methylcytidine(1402) in 16S rRNA + S-adenosyl-L-homocysteine + H(+). Functionally, specifically methylates the N4 position of cytidine in position 1402 (C1402) of 16S rRNA. In Ruminiclostridium cellulolyticum (strain ATCC 35319 / DSM 5812 / JCM 6584 / H10) (Clostridium cellulolyticum), this protein is Ribosomal RNA small subunit methyltransferase H.